Reading from the N-terminus, the 185-residue chain is Ribosome-recycling factor (185 aa).

This sequence belongs to the RRF family.

Its subcellular location is the cytoplasm. Functionally, responsible for the release of ribosomes from messenger RNA at the termination of protein biosynthesis. May increase the efficiency of translation by recycling ribosomes from one round of translation to another. In Aliivibrio salmonicida (strain LFI1238) (Vibrio salmonicida (strain LFI1238)), this protein is Ribosome-recycling factor.